Consider the following 239-residue polypeptide: 1-(5-phosphoribosyl)-5-[(5-phosphoribosylamino)methylideneamino] imidazole-4-carboxamide isomerase (239 aa).

The active-site Proton acceptor is aspartate 9. The Proton donor role is filled by aspartate 131.

The protein belongs to the HisA/HisF family.

It localises to the cytoplasm. The catalysed reaction is 1-(5-phospho-beta-D-ribosyl)-5-[(5-phospho-beta-D-ribosylamino)methylideneamino]imidazole-4-carboxamide = 5-[(5-phospho-1-deoxy-D-ribulos-1-ylimino)methylamino]-1-(5-phospho-beta-D-ribosyl)imidazole-4-carboxamide. Its pathway is amino-acid biosynthesis; L-histidine biosynthesis; L-histidine from 5-phospho-alpha-D-ribose 1-diphosphate: step 4/9. This is 1-(5-phosphoribosyl)-5-[(5-phosphoribosylamino)methylideneamino] imidazole-4-carboxamide isomerase from Bacteroides fragilis (strain ATCC 25285 / DSM 2151 / CCUG 4856 / JCM 11019 / LMG 10263 / NCTC 9343 / Onslow / VPI 2553 / EN-2).